We begin with the raw amino-acid sequence, 133 residues long: UPF0292 protein TGAM_1777 (133 aa).

One can recognise a Toprim domain in the interval 20 to 100 (EGALIVEGLR…RVDVETRREL (81 aa)). Mg(2+)-binding residues include glutamate 26, aspartate 69, and aspartate 71.

It belongs to the UPF0292 family. The cofactor is Mg(2+).

The chain is UPF0292 protein TGAM_1777 from Thermococcus gammatolerans (strain DSM 15229 / JCM 11827 / EJ3).